The following is a 494-amino-acid chain: UPF0371 protein SPJ_0333 (494 aa).

This sequence belongs to the UPF0371 family.

The sequence is that of UPF0371 protein SPJ_0333 from Streptococcus pneumoniae (strain JJA).